A 1182-amino-acid chain; its full sequence is Retrotransposable element SLACS 132 kDa protein (1182 aa).

Disordered stretches follow at residues 77-97 (GERS…PRER), 163-220 (DVLD…STDQ), 317-339 (RRKR…ALRL), and 418-478 (RTAR…STAP). Over residues 163 to 174 (DVLDEEEQDDDL) the composition is skewed to acidic residues. The segment covering 420 to 446 (ARREQQQQRGKDNQEEEDRQKKEEKSL) has biased composition (basic and acidic residues). Residues 456 to 475 (SVRQGGQPSSSQPKRLNRWS) show a composition bias toward polar residues. In terms of domain architecture, Reverse transcriptase spans 560–790 (NADVSMEVGR…TGDTGFGTAV (231 aa)).

The enzyme catalyses DNA(n) + a 2'-deoxyribonucleoside 5'-triphosphate = DNA(n+1) + diphosphate. This Trypanosoma brucei gambiense protein is Retrotransposable element SLACS 132 kDa protein.